A 585-amino-acid chain; its full sequence is Putative indole-3-acetic acid-amido synthetase GH3.9 (585 aa).

The protein belongs to the IAA-amido conjugating enzyme family.

Catalyzes the synthesis of indole-3-acetic acid (IAA)-amino acid conjugates, providing a mechanism for the plant to cope with the presence of excess auxin. The protein is Putative indole-3-acetic acid-amido synthetase GH3.9 (GH3.9) of Arabidopsis thaliana (Mouse-ear cress).